The following is a 49-amino-acid chain: Delta-actitoxin-Axm1b (49 aa).

The interval 1–7 (GVPCLCD) is well-structured region. Intrachain disulfides connect Cys4/Cys46, Cys6/Cys36, and Cys29/Cys47. The segment at 8-17 (SDGPRPRGNT) is arg-14 loop (non-well-structured region). The segment at 18 to 49 (LSGILWFYPSGCPSGWHNCKAHGPNIGWCCKK) is well-structured region.

The protein belongs to the sea anemone sodium channel inhibitory toxin family. Type I subfamily.

It is found in the secreted. It localises to the nematocyst. Functionally, binds specifically to voltage-gated sodium channels (Nav) (site 3), thereby delaying their inactivation. This toxin has the highest affinity of all anemone toxins for the mammalian sodium channel, whereas its paralog Anthopleurin-A retains the greatest capacity to discriminate between cardiac (Nav1.5/SCN5A) and neuronal sodium channels. When tested electrophysiologically, this toxin exhibits a high affinity for multiple sodium channels with a 50-fold preference for rat cardiac (Nav1.5/SCN5A) over neuronal channels (0.1 nM versus 5 nM). When tested by ion flux, the affinities are similar and appear to have higher affinity (9 nM versus 22 nM). The residue Lys-37 of this toxin has been shown to interact with channel Nav1.5 (residue Asp-1612 in rat and Asp-1610 in human), which is located in the DIV S3-S4 linker (corresponding to channel site 3). Selectively modifies sodium channel inactivation from the open state with little effect on channel activation or on inactivation from closed states. Does not display phospholipid-binding activities, suggesting that the domain IV S3-S4 linker is located at the extracellular surface and not buried in the phospholipid bilayer. In Anthopleura xanthogrammica (Giant green sea anemone), this protein is Delta-actitoxin-Axm1b.